Reading from the N-terminus, the 431-residue chain is Enolase (431 aa).

Gln167 contributes to the (2R)-2-phosphoglycerate binding site. The active-site Proton donor is the Glu209. Mg(2+) contacts are provided by Asp246, Glu287, and Asp314. (2R)-2-phosphoglycerate-binding residues include Lys339, Arg368, Ser369, and Lys390. The Proton acceptor role is filled by Lys339.

This sequence belongs to the enolase family. Mg(2+) is required as a cofactor.

Its subcellular location is the cytoplasm. It is found in the secreted. It localises to the cell surface. The enzyme catalyses (2R)-2-phosphoglycerate = phosphoenolpyruvate + H2O. It participates in carbohydrate degradation; glycolysis; pyruvate from D-glyceraldehyde 3-phosphate: step 4/5. Its function is as follows. Catalyzes the reversible conversion of 2-phosphoglycerate (2-PG) into phosphoenolpyruvate (PEP). It is essential for the degradation of carbohydrates via glycolysis. In Prochlorococcus marinus (strain MIT 9303), this protein is Enolase.